Reading from the N-terminus, the 379-residue chain is UDP-4-amino-4-deoxy-L-arabinose--oxoglutarate aminotransferase (379 aa).

Residue lysine 182 is modified to N6-(pyridoxal phosphate)lysine.

Belongs to the DegT/DnrJ/EryC1 family. ArnB subfamily. Homodimer. Pyridoxal 5'-phosphate serves as cofactor.

The catalysed reaction is UDP-4-amino-4-deoxy-beta-L-arabinose + 2-oxoglutarate = UDP-beta-L-threo-pentopyranos-4-ulose + L-glutamate. It functions in the pathway nucleotide-sugar biosynthesis; UDP-4-deoxy-4-formamido-beta-L-arabinose biosynthesis; UDP-4-deoxy-4-formamido-beta-L-arabinose from UDP-alpha-D-glucuronate: step 2/3. Its pathway is bacterial outer membrane biogenesis; lipopolysaccharide biosynthesis. Catalyzes the conversion of UDP-4-keto-arabinose (UDP-Ara4O) to UDP-4-amino-4-deoxy-L-arabinose (UDP-L-Ara4N). The modified arabinose is attached to lipid A and is required for resistance to polymyxin and cationic antimicrobial peptides. This is UDP-4-amino-4-deoxy-L-arabinose--oxoglutarate aminotransferase from Escherichia coli O81 (strain ED1a).